The sequence spans 160 residues: 2-amino-4-hydroxy-6-hydroxymethyldihydropteridine pyrophosphokinase (160 aa).

This sequence belongs to the HPPK family. Monomer.

It catalyses the reaction 6-hydroxymethyl-7,8-dihydropterin + ATP = (7,8-dihydropterin-6-yl)methyl diphosphate + AMP + H(+). The protein operates within cofactor biosynthesis; tetrahydrofolate biosynthesis; 2-amino-4-hydroxy-6-hydroxymethyl-7,8-dihydropteridine diphosphate from 7,8-dihydroneopterin triphosphate: step 4/4. Catalyzes the transfer of pyrophosphate from adenosine triphosphate (ATP) to 6-hydroxymethyl-7,8-dihydropterin, an enzymatic step in folate biosynthesis pathway. The polypeptide is 2-amino-4-hydroxy-6-hydroxymethyldihydropteridine pyrophosphokinase (folK) (Haemophilus influenzae (strain ATCC 51907 / DSM 11121 / KW20 / Rd)).